The chain runs to 469 residues: Siroheme synthase (469 aa).

Positions 1–203 are precorrin-2 dehydrogenase /sirohydrochlorin ferrochelatase; sequence MDYLPIFTDL…GQEQDAKQEL (203 aa). NAD(+) is bound by residues 22-23 and 43-44; these read DV and PV. Position 128 is a phosphoserine (Ser-128). The interval 214–469 is uroporphyrinogen-III C-methyltransferase; the sequence is GQVALIGSGP…LQQSAVVKLA (256 aa). Pro-223 serves as a coordination point for S-adenosyl-L-methionine. Asp-246 functions as the Proton acceptor in the catalytic mechanism. Lys-268 acts as the Proton donor in catalysis. S-adenosyl-L-methionine-binding positions include 299-301, Val-304, 329-330, Met-381, and Gly-410; these read GGD and TA.

This sequence in the N-terminal section; belongs to the precorrin-2 dehydrogenase / sirohydrochlorin ferrochelatase family. The protein in the C-terminal section; belongs to the precorrin methyltransferase family.

It catalyses the reaction uroporphyrinogen III + 2 S-adenosyl-L-methionine = precorrin-2 + 2 S-adenosyl-L-homocysteine + H(+). The catalysed reaction is precorrin-2 + NAD(+) = sirohydrochlorin + NADH + 2 H(+). The enzyme catalyses siroheme + 2 H(+) = sirohydrochlorin + Fe(2+). Its pathway is cofactor biosynthesis; adenosylcobalamin biosynthesis; precorrin-2 from uroporphyrinogen III: step 1/1. It participates in cofactor biosynthesis; adenosylcobalamin biosynthesis; sirohydrochlorin from precorrin-2: step 1/1. The protein operates within porphyrin-containing compound metabolism; siroheme biosynthesis; precorrin-2 from uroporphyrinogen III: step 1/1. It functions in the pathway porphyrin-containing compound metabolism; siroheme biosynthesis; siroheme from sirohydrochlorin: step 1/1. Its pathway is porphyrin-containing compound metabolism; siroheme biosynthesis; sirohydrochlorin from precorrin-2: step 1/1. Functionally, multifunctional enzyme that catalyzes the SAM-dependent methylations of uroporphyrinogen III at position C-2 and C-7 to form precorrin-2 via precorrin-1. Then it catalyzes the NAD-dependent ring dehydrogenation of precorrin-2 to yield sirohydrochlorin. Finally, it catalyzes the ferrochelation of sirohydrochlorin to yield siroheme. In Photobacterium profundum (strain SS9), this protein is Siroheme synthase.